A 512-amino-acid chain; its full sequence is FAD-linked oxidoreductase iacH (512 aa).

The signal sequence occupies residues 1–22 (MVSLKACVVAYGFTLLPALVSG). Residues Asn39, Asn55, Asn69, Asn210, Asn217, Asn278, Asn295, and Asn367 are each glycosylated (N-linked (GlcNAc...) asparagine). Residues 77-248 (LDTPDVQLVV…TSLEKKIYPG (172 aa)) form the FAD-binding PCMH-type domain.

Belongs to the oxygen-dependent FAD-linked oxidoreductase family. FAD serves as cofactor.

Its pathway is secondary metabolite biosynthesis. Its function is as follows. FAD-linked oxidoreductase; part of the gene cluster that mediates the biosynthesis of iso-A82775C, a enylepoxycyclohexane and biosynthetic precursor of the chloropestolide anticancer natural products. Within the cluster, the prenyltransferase iacE prenylates siccayne to generate pestalodiol E, using dimethylallyl diphosphate (DMAPP) as cosubstrate. The probable oxidoreductase iacF is then involved in the epoxidation of pestalodiol F to pestalodiol F, which is further converted to pestalofone A by the short-chain dehydrogenase/reductase iacG. Iso-A82775C is subsequently generated from pestalofone A by the short-chain dehydrogenase/reductase iacC. Iso-A82775C is further condensed with maldoxin via a Diels-Alder reaction to produce the anticancer natural products chloropestolides A to E. The chain is FAD-linked oxidoreductase iacH from Pestalotiopsis fici (strain W106-1 / CGMCC3.15140).